We begin with the raw amino-acid sequence, 726 residues long: ORC ubiquitin ligase 1 (726 aa).

The segment at 18–56 (CHICLGKVRQPVICINNHVFCSICIDLWLKNNSQCPACR) adopts an RING-type; degenerate zinc-finger fold. Coiled-coil stretches lie at residues 87–129 (LRKT…TILD) and 155–270 (ETVA…MNSI). A Phosphoserine modification is found at S210. Disordered regions lie at residues 276-334 (SADG…TSKA) and 436-460 (NVSN…ECFS). Residues 280 to 290 (KGSKGSEEDVV) show a composition bias toward basic and acidic residues. Low complexity predominate over residues 304–318 (SSTSSSSHLAKPSSS). The segment covering 319-334 (RLCDTSSARQESTSKA) has biased composition (polar residues). Over residues 446–457 (DISRSENEKKSE) the composition is skewed to basic and acidic residues. 5 positions are modified to phosphoserine: S526, S553, S561, S568, and S570. 2 disordered regions span residues 570–602 (SSQG…DQLE) and 687–726 (QSPW…ATKS). Basic and acidic residues predominate over residues 579–588 (EPDKLEEKTE). Over residues 589–602 (LNLSKGSLTNDQLE) the composition is skewed to polar residues. The span at 713-726 (SSLSSASPSKATKS) shows a compositional bias: low complexity. Phosphoserine occurs at positions 719 and 721.

As to quaternary structure, associates with ORC complex. Binds to chromatin; association is cell cycle-regulated, absent from mitotic chromosomes, is associated with chromatin from G1 and partially released from chromatin from mid S-phase. Post-translationally, auto-ubiquitinated.

It is found in the chromosome. It carries out the reaction S-ubiquitinyl-[E2 ubiquitin-conjugating enzyme]-L-cysteine + [acceptor protein]-L-lysine = [E2 ubiquitin-conjugating enzyme]-L-cysteine + N(6)-ubiquitinyl-[acceptor protein]-L-lysine.. In terms of biological role, E3 ubiquitin ligase essential for DNA replication origin activation during S phase. Acts as a replication origin selector which selects the origins to be fired and catalyzes the multi-mono-ubiquitination of a subset of chromatin-bound ORC3 and ORC5 during S-phase. The polypeptide is ORC ubiquitin ligase 1 (Homo sapiens (Human)).